Here is a 136-residue protein sequence, read N- to C-terminus: DNA-directed RNA polymerase subunit omega (136 aa).

The segment at 81 to 136 (EAEAVPLLSSSPAAAAVAPQSSGDDGDIQFDRMSEEDLLRGLENLAPPTETEDEGD) is disordered. A compositionally biased stretch (low complexity) spans 83 to 99 (EAVPLLSSSPAAAAVAP). Basic and acidic residues predominate over residues 109–120 (QFDRMSEEDLLR).

The protein belongs to the RNA polymerase subunit omega family. In terms of assembly, the RNAP catalytic core consists of 2 alpha, 1 beta, 1 beta' and 1 omega subunit. When a sigma factor is associated with the core the holoenzyme is formed, which can initiate transcription.

The enzyme catalyses RNA(n) + a ribonucleoside 5'-triphosphate = RNA(n+1) + diphosphate. Functionally, promotes RNA polymerase assembly. Latches the N- and C-terminal regions of the beta' subunit thereby facilitating its interaction with the beta and alpha subunits. The sequence is that of DNA-directed RNA polymerase subunit omega from Methylobacterium nodulans (strain LMG 21967 / CNCM I-2342 / ORS 2060).